The sequence spans 152 residues: Xanthine-guanine phosphoribosyltransferase (152 aa).

Residues 37–38 (RG), Arg69, and 88–96 (DDLVDTGGT) each bind 5-phospho-alpha-D-ribose 1-diphosphate. Arg69 is a GMP binding site. A Mg(2+)-binding site is contributed by Asp89. Guanine is bound by residues Asp92 and Ile135. Residues Asp92 and Ile135 each coordinate xanthine. GMP is bound by residues 92–96 (DTGGT) and 134–135 (WI).

Belongs to the purine/pyrimidine phosphoribosyltransferase family. XGPT subfamily. In terms of assembly, homotetramer. Requires Mg(2+) as cofactor.

Its subcellular location is the cell inner membrane. The enzyme catalyses GMP + diphosphate = guanine + 5-phospho-alpha-D-ribose 1-diphosphate. The catalysed reaction is XMP + diphosphate = xanthine + 5-phospho-alpha-D-ribose 1-diphosphate. It carries out the reaction IMP + diphosphate = hypoxanthine + 5-phospho-alpha-D-ribose 1-diphosphate. Its pathway is purine metabolism; GMP biosynthesis via salvage pathway; GMP from guanine: step 1/1. The protein operates within purine metabolism; XMP biosynthesis via salvage pathway; XMP from xanthine: step 1/1. In terms of biological role, purine salvage pathway enzyme that catalyzes the transfer of the ribosyl-5-phosphate group from 5-phospho-alpha-D-ribose 1-diphosphate (PRPP) to the N9 position of the 6-oxopurines guanine and xanthine to form the corresponding ribonucleotides GMP (guanosine 5'-monophosphate) and XMP (xanthosine 5'-monophosphate), with the release of PPi. To a lesser extent, also acts on hypoxanthine. The sequence is that of Xanthine-guanine phosphoribosyltransferase from Escherichia coli O7:K1 (strain IAI39 / ExPEC).